The primary structure comprises 266 residues: Apolipoprotein A-I (266 aa).

Positions 1–18 (MKAVVLTLAVLFLTGSQA) are cleaved as a signal peptide. 2 consecutive repeat copies span residues 67–88 (LKLL…EQIG) and 89–110 (PVTQ…QEMS). The tract at residues 67 to 266 (LKLLDNWDSL…DEAAKKLNTQ (200 aa)) is 10 X approximate tandem repeats. Methionine 109 is subject to Methionine sulfoxide. A 3; half-length repeat occupies 111–121 (KDLEEVKQKVQ). Tandem repeats lie at residues 122-143 (PYLD…QKVA), 144-165 (PLGT…EKLT), 166-187 (PLGE…AHLA), 188-209 (PYSD…EGGS), and 210-231 (ASLA…EKAK). Residues 232 to 242 (PALEDLRQGLL) form a 9; half-length repeat. Repeat unit 10 spans residues 243–266 (PVLESFKVSLLAAVDEAAKKLNTQ).

The protein belongs to the apolipoprotein A1/A4/E family. As to quaternary structure, homodimer. Interacts with APOA1BP and CLU. Component of a sperm activating protein complex (SPAP), consisting of APOA1, an immunoglobulin heavy chain, an immunoglobulin light chain and albumin. Interacts with NDRG1. Interacts with SCGB3A2. Interacts with NAXE and YJEFN3. In terms of processing, glycosylated. Palmitoylated. Post-translationally, phosphorylation sites are present in the extracellular medium.

It localises to the secreted. Participates in the reverse transport of cholesterol from tissues to the liver for excretion by promoting cholesterol efflux from tissues and by acting as a cofactor for the lecithin cholesterol acyltransferase (LCAT). As part of the SPAP complex, activates spermatozoa motility. This Mustela putorius furo (European domestic ferret) protein is Apolipoprotein A-I (APOA1).